A 345-amino-acid polypeptide reads, in one-letter code: S-adenosylmethionine:tRNA ribosyltransferase-isomerase (345 aa).

Belongs to the QueA family. As to quaternary structure, monomer.

The protein resides in the cytoplasm. It carries out the reaction 7-aminomethyl-7-carbaguanosine(34) in tRNA + S-adenosyl-L-methionine = epoxyqueuosine(34) in tRNA + adenine + L-methionine + 2 H(+). Its pathway is tRNA modification; tRNA-queuosine biosynthesis. Its function is as follows. Transfers and isomerizes the ribose moiety from AdoMet to the 7-aminomethyl group of 7-deazaguanine (preQ1-tRNA) to give epoxyqueuosine (oQ-tRNA). The polypeptide is S-adenosylmethionine:tRNA ribosyltransferase-isomerase (Finegoldia magna (strain ATCC 29328 / DSM 20472 / WAL 2508) (Peptostreptococcus magnus)).